A 177-amino-acid polypeptide reads, in one-letter code: Outer envelope pore protein 21, chloroplastic (177 aa).

The Cytoplasmic segment spans residues 1–21; the sequence is METSLRYGGDSKALKIHAKEK. Residues 22-31 form a beta stranded membrane-spanning segment; it reads LRIDTNTFFQ. Topologically, residues 32–55 are chloroplast intermembrane; that stretch reads VRGGLDTKTGQPSSGSALIRHFYP. A beta stranded transmembrane segment spans residues 56-65; it reads NFSATLGVGV. At 66-81 the chain is on the cytoplasmic side; the sequence is RYDKQDSVGVRYAKND. Residues 82–91 form a beta stranded membrane-spanning segment; it reads KLRYTVLAKK. Over 92 to 97 the chain is Chloroplast intermembrane; sequence TFPVTN. The chain crosses the membrane as a beta stranded span at residues 98-107; that stretch reads DGLVNFKIKG. Residues 108-120 are Cytoplasmic-facing; sequence GCDVDQDFKEWKS. The beta stranded transmembrane segment at 121–130 threads the bilayer; it reads RGGAEFSWNV. The Chloroplast intermembrane segment spans residues 131-137; the sequence is FNFQKDQ. Residues 138 to 147 traverse the membrane as a beta stranded segment; that stretch reads DVRLRIGYEA. Over 148-152 the chain is Cytoplasmic; it reads FEQVP. A beta stranded transmembrane segment spans residues 153 to 162; it reads YLQIRENNWT. The Chloroplast intermembrane segment spans residues 163-168; that stretch reads FNADYK. The beta stranded transmembrane segment at 169–177 threads the bilayer; the sequence is GRWNVRYDL.

The protein belongs to the plastid outer envelope porin OEP21 (TC 1.B.29) family. In terms of tissue distribution, present in roots, shoots and leaves.

It localises to the plastid. It is found in the etioplast membrane. The protein localises to the chloroplast outer membrane. Its function is as follows. Voltage-dependent rectifying anion channel that facilitates the translocation between chloroplast and cytoplasm of phosphorylated carbohydrates such as triosephosphate, 3-phosphoglycerate and inorganic phosphate (Pi) depending of ATP to triosephosphate ratio in the plastidial intermembrane space; in high triosephosphate/ATP conditions (e.g. photosynthesis), export of triosphosphate from chloroplast (outward rectifying channels), but in high ATP/triosephosphate conditions (e.g. dark phase), import of phosphosolutes (inward rectifying channels). The protein is Outer envelope pore protein 21, chloroplastic (OEP21) of Pisum sativum (Garden pea).